Reading from the N-terminus, the 170-residue chain is MSNTSFALRFSPRIARFLGNAYAPSYSAKNTFAPANSRLTNSVYAPGVAIGNTYAPATGRVSFNAYSPSYSSRSNYSPSTDLATDTKYSPFYEGKLNYSPRLWYSNDYNPFAYISKRRVYAPFDYYDFARKIDYAPTDIYVKMPKIKIDDSALRYLADYNRFIVNLLRVL.

This is an uncharacterized protein from Acidianus bottle-shaped virus (isolate Italy/Pozzuoli) (ABV).